Reading from the N-terminus, the 514-residue chain is HTH-type transcriptional regulatory protein TyrR (514 aa).

Positions 2–72 constitute an ACT domain; sequence RLEVFCEDRL…GVTDVRTVPW (71 aa). Residues 78-120 form the PAS domain; it reads EHLALSALLEALPEPVLSLDMKSKIEMANPASCQLFAHTQDRM. One can recognise a Sigma-54 factor interaction domain in the interval 206-428; it reads IIAVSAKMKH…VKNAIYRALT (223 aa). ATP contacts are provided by residues 234–241 and 290–299; these read GNTGTGKD and ANGGSVLLDE. The H-T-H motif DNA-binding region spans 482–502; it reads STRKLAKRLGVSHTAIANKLR.

As to quaternary structure, homodimer. In presence of tyrosine (or high concentrations of phenylalanine or tryptophan) and ATP, it self-associates to form an hexamer.

It is found in the cytoplasm. Its function is as follows. Dual transcriptional regulator of the TyrR regulon, which includes a number of genes coding for proteins involved in the biosynthesis or transport of the three aromatic amino acids, phenylalanine, tyrosine and tryptophan. These three aromatic amino acids act as effectors which bind to the TyrR protein to form an active regulatory protein. Acts by binding specifically to TyrR boxes in the promoter region of the target genes. In Citrobacter braakii, this protein is HTH-type transcriptional regulatory protein TyrR.